A 30-amino-acid polypeptide reads, in one-letter code: Gamma-II crystallin (30 aa).

One can recognise a Beta/gamma crystallin 'Greek key' domain in the interval 1–30; it reads GKITFYEDRNFQGRCYECSTDCPDLSPYFS.

The protein belongs to the beta/gamma-crystallin family. Monomer.

In terms of biological role, crystallins are the dominant structural components of the vertebrate eye lens. The protein is Gamma-II crystallin of Rhizoprionodon acutus (Milk shark).